The primary structure comprises 61 residues: Small ribosomal subunit protein uS14 (61 aa).

Residues C24, C27, C40, and C43 each coordinate Zn(2+).

The protein belongs to the universal ribosomal protein uS14 family. Zinc-binding uS14 subfamily. Part of the 30S ribosomal subunit. Contacts proteins S3 and S10. Zn(2+) serves as cofactor.

Binds 16S rRNA, required for the assembly of 30S particles and may also be responsible for determining the conformation of the 16S rRNA at the A site. In Oleidesulfovibrio alaskensis (strain ATCC BAA-1058 / DSM 17464 / G20) (Desulfovibrio alaskensis), this protein is Small ribosomal subunit protein uS14.